Here is a 411-residue protein sequence, read N- to C-terminus: Serine hydroxymethyltransferase (411 aa).

(6S)-5,6,7,8-tetrahydrofolate contacts are provided by residues Leu-117 and 121 to 123; that span reads GHL. Lys-226 is subject to N6-(pyridoxal phosphate)lysine.

Belongs to the SHMT family. In terms of assembly, homodimer. Requires pyridoxal 5'-phosphate as cofactor.

It is found in the cytoplasm. It catalyses the reaction (6R)-5,10-methylene-5,6,7,8-tetrahydrofolate + glycine + H2O = (6S)-5,6,7,8-tetrahydrofolate + L-serine. The protein operates within one-carbon metabolism; tetrahydrofolate interconversion. It participates in amino-acid biosynthesis; glycine biosynthesis; glycine from L-serine: step 1/1. Functionally, catalyzes the reversible interconversion of serine and glycine with tetrahydrofolate (THF) serving as the one-carbon carrier. This reaction serves as the major source of one-carbon groups required for the biosynthesis of purines, thymidylate, methionine, and other important biomolecules. Also exhibits THF-independent aldolase activity toward beta-hydroxyamino acids, producing glycine and aldehydes, via a retro-aldol mechanism. The chain is Serine hydroxymethyltransferase from Syntrophobacter fumaroxidans (strain DSM 10017 / MPOB).